The sequence spans 463 residues: Cytochrome P450 4d8 (463 aa).

Heme is bound by residues glutamate 267 and cysteine 409.

Belongs to the cytochrome P450 family. Heme is required as a cofactor.

It localises to the endoplasmic reticulum membrane. The protein localises to the microsome membrane. May be involved in the metabolism of insect hormones and in the breakdown of synthetic insecticides. The polypeptide is Cytochrome P450 4d8 (Cyp4d8) (Drosophila melanogaster (Fruit fly)).